The chain runs to 118 residues: ATP synthase subunit c (118 aa).

The next 2 helical transmembrane spans lie at A34 to G54 and M88 to A108.

This sequence belongs to the ATPase C chain family. As to quaternary structure, F-type ATPases have 2 components, F(1) - the catalytic core - and F(0) - the membrane proton channel. F(1) has five subunits: alpha(3), beta(3), gamma(1), delta(1), epsilon(1). F(0) has three main subunits: a(1), b(2) and c(10-14). The alpha and beta chains form an alternating ring which encloses part of the gamma chain. F(1) is attached to F(0) by a central stalk formed by the gamma and epsilon chains, while a peripheral stalk is formed by the delta and b chains.

Its subcellular location is the cell inner membrane. Its function is as follows. F(1)F(0) ATP synthase produces ATP from ADP in the presence of a proton or sodium gradient. F-type ATPases consist of two structural domains, F(1) containing the extramembraneous catalytic core and F(0) containing the membrane proton channel, linked together by a central stalk and a peripheral stalk. During catalysis, ATP synthesis in the catalytic domain of F(1) is coupled via a rotary mechanism of the central stalk subunits to proton translocation. In terms of biological role, key component of the F(0) channel; it plays a direct role in translocation across the membrane. A homomeric c-ring of between 10-14 subunits forms the central stalk rotor element with the F(1) delta and epsilon subunits. The chain is ATP synthase subunit c from Syntrophus aciditrophicus (strain SB).